Reading from the N-terminus, the 717-residue chain is Inhibitor of nuclear factor kappa-B kinase subunit epsilon (717 aa).

The region spanning Trp-9–Ser-315 is the Protein kinase domain. An ATP-binding site is contributed by Leu-15–Val-23. Lys-30 is covalently cross-linked (Glycyl lysine isopeptide (Lys-Gly) (interchain with G-Cter in ubiquitin)). Residue Lys-38 coordinates ATP. The active-site Proton acceptor is the Asp-135. Residue Ser-172 is modified to Phosphoserine; by autocatalysis and IKKB. Lys-231 is covalently cross-linked (Glycyl lysine isopeptide (Lys-Gly) (interchain with G-Cter in SUMO1)). Residues Ser-385–Asp-650 form an interaction with DDX3X region. A Glycyl lysine isopeptide (Lys-Gly) (interchain with G-Cter in ubiquitin) cross-link involves residue Lys-403. The tract at residues Leu-452 to Ser-473 is leucine-zipper. At Thr-503 the chain carries Phosphothreonine. The residue at position 665 (Ser-665) is a Phosphoserine.

It belongs to the protein kinase superfamily. Ser/Thr protein kinase family. I-kappa-B kinase subfamily. In terms of assembly, homodimer. Interacts with MAVS/IPS1. Interacts (via protein kinase domain) with TTLL12 (via N-terminus); the interaction prevents MAVS binding to IKBKE. Interacts with the adapter proteins AZI2/NAP1, TANK and TBKBP1/SINTBAD. Interacts with SIKE1. Interacts with TICAM1/TRIF, IRF3 and RIGI; interactions are disrupted by the interaction between IKBKE and SIKE1. Interacts with TOPORS; induced by DNA damage. Interacts with CYLD, IKBKB, IKBKG and MYD88. Interacts with IFIH1. Interacts with DDX3X; the interaction may be induced upon virus infection. Interacts with TRIM6 (via SPRY box). Interacts with unanchored K48-linked polyubiquitin chains; this leads to IKBKE activation. Interacts with TBK1. Interacts with FKBP5. In terms of processing, sumoylation by TOPORS upon DNA damage is required for protection of cells against DNA damage-induced cell death. Desumoylated by SENP1. Autophosphorylated and phosphorylated by IKBKB/IKKB. Phosphorylation at Ser-172 is enhanced by the interaction with DDX3X. Phosphorylated at Thr-503 upon IFN activation. Post-translationally, 'Lys-63'-linked polyubiquitinated at Lys-30 and Lys-403 by TRAF2:BIRC2 and TRAF2:BIRC3 complexes. Ubiquitination is induced by LPS, TNFA and interleukin-1 and required for full kinase activity and KF-kappa-B pathway activation. As to expression, expressed in bone marrow-derived macrophages and at low levels in liver and white adipose tissue (at protein level). Detected in muscle and lung.

It localises to the cytoplasm. It is found in the nucleus. The protein localises to the PML body. It carries out the reaction L-seryl-[I-kappa-B protein] + ATP = O-phospho-L-seryl-[I-kappa-B protein] + ADP + H(+). Kinase activity is inhibited competitively by amlexanox. Its function is as follows. Serine/threonine kinase that plays an essential role in regulating inflammatory responses to viral infection, through the activation of the type I IFN, NF-kappa-B and STAT signaling. Also involved in TNFA and inflammatory cytokines, like Interleukin-1, signaling. Following activation of viral RNA sensors, such as RIG-I-like receptors, associates with DDX3X and phosphorylates interferon regulatory factors (IRFs), IRF3 and IRF7, as well as DDX3X. This activity allows subsequent homodimerization and nuclear translocation of the IRF3 leading to transcriptional activation of pro-inflammatory and antiviral genes including IFNB. In order to establish such an antiviral state, IKBKE forms several different complexes whose composition depends on the type of cell and cellular stimuli. Thus, several scaffolding molecules including IPS1/MAVS, TANK, AZI2/NAP1 or TBKBP1/SINTBAD can be recruited to the IKBKE-containing-complexes. Activated by polyubiquitination in response to TNFA and interleukin-1, regulates the NF-kappa-B signaling pathway through, at least, the phosphorylation of CYLD. Phosphorylates inhibitors of NF-kappa-B thus leading to the dissociation of the inhibitor/NF-kappa-B complex and ultimately the degradation of the inhibitor. In addition, is also required for the induction of a subset of ISGs which displays antiviral activity, may be through the phosphorylation of STAT1 at 'Ser-708'. Phosphorylation of STAT1 at 'Ser-708' also seems to promote the assembly and DNA binding of ISGF3 (STAT1:STAT2:IRF9) complexes compared to GAF (STAT1:STAT1) complexes, in this way regulating the balance between type I and type II IFN responses. Protects cells against DNA damage-induced cell death. Also plays an important role in energy balance regulation by sustaining a state of chronic, low-grade inflammation in obesity, wich leads to a negative impact on insulin sensitivity. Phosphorylates AKT1. The sequence is that of Inhibitor of nuclear factor kappa-B kinase subunit epsilon (Ikbke) from Mus musculus (Mouse).